The sequence spans 373 residues: MATQAHSLSYAGCNFLRQRLVLSTLSGRPVKIRKIRARDDNPGLRDFEASFIRLLDKITNGSRIEINQTGTTLYYQPGLLYGGSVEHDCSVLRGIGYYLESLLCLAPFMKHPLKIVLRGVTNDQVDPSVDVLKATALPLLKQFGIDGESFELKIVRRGMPPGGGGEVVFSCPVRKVLKPIQLTDPGKIKRIRGMAYSVRVSPQMANRIVDSARSILNKFIPDIYIYTDHMKGVNSGKSPGFGLSLVAETTSGTFLSAELASNPQGQGAAVLPEDLGRNCARLLLEEIYRGGCVDSTNQSLALLLMTLGQQDVSKVLLGPLSPYTIEFLRHLKSFFQIMFKIETKPCGEELKGGDKVLMTCVGIGFSNLSKTLK.

This sequence belongs to the RNA 3'-terminal cyclase family. Type 2 subfamily. In terms of assembly, part of the small subunit (SSU) processome, composed of more than 70 proteins and the RNA chaperone small nucleolar RNA (snoRNA) U3. Interacts with BMS1.

It is found in the nucleus. The protein resides in the nucleolus. Functionally, as part of the small subunit (SSU) processome, it plays a role in 40S-ribosomal-subunit biogenesis in the early pre-rRNA processing steps at sites A0, A1 and A2 that are required for proper maturation of the 18S RNA. Activates BMS1 by promoting GDP/GTP exchange. Does not have cyclase activity. The protein is RNA 3'-terminal phosphate cyclase-like protein of Homo sapiens (Human).